A 265-amino-acid polypeptide reads, in one-letter code: Energy-coupling factor transporter transmembrane protein EcfT (265 aa).

5 helical membrane passes run 29–49, 73–93, 110–130, 143–163, and 242–262; these read IILF…AILI, VWIL…GGTV, AIFI…LTLT, LLGP…MMSI, and FTWR…VIGW.

Belongs to the energy-coupling factor EcfT family. In terms of assembly, forms a stable energy-coupling factor (ECF) transporter complex composed of 2 membrane-embedded substrate-binding proteins (S component), 2 ATP-binding proteins (A component) and 2 transmembrane proteins (T component). May be able to interact with more than 1 S component at a time.

Its subcellular location is the cell membrane. Functionally, transmembrane (T) component of an energy-coupling factor (ECF) ABC-transporter complex. Unlike classic ABC transporters this ECF transporter provides the energy necessary to transport a number of different substrates. This is Energy-coupling factor transporter transmembrane protein EcfT from Brevibacillus brevis (strain 47 / JCM 6285 / NBRC 100599).